A 219-amino-acid polypeptide reads, in one-letter code: MMATVTVLDYGSGNVRSAVRALERAGAEVTLSAKADDVLNADGLVVPGVGAFATVMKELKSVDALRMIGRRVAGGRPVLAICVGLQILFEAGVEHGNSEPGMGEWPGTVELLPADVVPHMGWNTVQAPADSMLFDGVRDERFYFVHSYGVQHWDFDVTQPKMKPPAVTWSEHGAKFIAAVENGPLCATQFHPEKSDDAGARLLKNWVDSLPATGRNQVA.

Residues 4–216 (TVTVLDYGSG…VDSLPATGRN (213 aa)) enclose the Glutamine amidotransferase type-1 domain. The Nucleophile role is filled by Cys-82. Active-site residues include His-191 and Glu-193.

Heterodimer of HisH and HisF.

Its subcellular location is the cytoplasm. It carries out the reaction 5-[(5-phospho-1-deoxy-D-ribulos-1-ylimino)methylamino]-1-(5-phospho-beta-D-ribosyl)imidazole-4-carboxamide + L-glutamine = D-erythro-1-(imidazol-4-yl)glycerol 3-phosphate + 5-amino-1-(5-phospho-beta-D-ribosyl)imidazole-4-carboxamide + L-glutamate + H(+). It catalyses the reaction L-glutamine + H2O = L-glutamate + NH4(+). The protein operates within amino-acid biosynthesis; L-histidine biosynthesis; L-histidine from 5-phospho-alpha-D-ribose 1-diphosphate: step 5/9. Functionally, IGPS catalyzes the conversion of PRFAR and glutamine to IGP, AICAR and glutamate. The HisH subunit catalyzes the hydrolysis of glutamine to glutamate and ammonia as part of the synthesis of IGP and AICAR. The resulting ammonia molecule is channeled to the active site of HisF. In Renibacterium salmoninarum (strain ATCC 33209 / DSM 20767 / JCM 11484 / NBRC 15589 / NCIMB 2235), this protein is Imidazole glycerol phosphate synthase subunit HisH.